The following is a 304-amino-acid chain: Type II restriction enzyme LlaDCHI (304 aa).

This sequence belongs to the DpnII type II restriction endonuclease family.

The catalysed reaction is Endonucleolytic cleavage of DNA to give specific double-stranded fragments with terminal 5'-phosphates.. Its function is as follows. A P subtype restriction enzyme that recognizes the double-stranded unmethylated sequence 5'-GATC-3' and cleaves before G-1. This Lactococcus lactis subsp. cremoris (Streptococcus cremoris) protein is Type II restriction enzyme LlaDCHI (llaDCHIR).